A 512-amino-acid chain; its full sequence is Glutathione-binding protein GsiB (512 aa).

A signal peptide spans 1–26 (MTQFITHKWLAALGLASSIAAFPALA).

This sequence belongs to the bacterial solute-binding protein 5 family. As to quaternary structure, the complex is composed of two ATP-binding proteins (GsiA), two transmembrane proteins (GsiC and GsiD) and a solute-binding protein (GsiB).

It localises to the periplasm. In terms of biological role, part of the ABC transporter complex GsiABCD involved in glutathione import. Binds glutathione. This chain is Glutathione-binding protein GsiB, found in Salmonella paratyphi A (strain ATCC 9150 / SARB42).